The primary structure comprises 563 residues: Methylcrotonoyl-CoA carboxylase beta chain, mitochondrial (563 aa).

The transit peptide at 1–22 (MWGALRSALRPCCRAAVPPQRA) directs the protein to the mitochondrion. Residues 49-306 (MKALVSQLHE…QKKMDVTIEP (258 aa)) form the CoA carboxyltransferase N-terminal domain. The segment at 49–555 (MKALVSQLHE…SAALNAPIQR (507 aa)) is carboxyltransferase. At K70 the chain carries N6-acetyllysine; alternate. Position 70 is an N6-succinyllysine; alternate (K70). K141 bears the N6-succinyllysine mark. A CoA carboxyltransferase C-terminal domain is found at 309–555 (EPLFPADELY…SAALNAPIQR (247 aa)). The segment at 343–372 (RFNEFKALYGDTLVTGFARIFGYPVGIIGN) is acyl-CoA binding. Position 433 is an N6-succinyllysine (K433). The residue at position 495 (K495) is an N6-acetyllysine; alternate. K495 is modified (N6-succinyllysine; alternate). Position 511 is an N6-acetyllysine (K511).

The protein belongs to the AccD/PCCB family. Probably a dodecamer composed of six biotin-containing alpha subunits (MCCC1) and six beta (MCCC2) subunits.

The protein localises to the mitochondrion matrix. It catalyses the reaction 3-methylbut-2-enoyl-CoA + hydrogencarbonate + ATP = 3-methyl-(2E)-glutaconyl-CoA + ADP + phosphate + H(+). The protein operates within amino-acid degradation; L-leucine degradation; (S)-3-hydroxy-3-methylglutaryl-CoA from 3-isovaleryl-CoA: step 2/3. Carboxyltransferase subunit of the 3-methylcrotonyl-CoA carboxylase, an enzyme that catalyzes the conversion of 3-methylcrotonyl-CoA to 3-methylglutaconyl-CoA, a critical step for leucine and isovaleric acid catabolism. The protein is Methylcrotonoyl-CoA carboxylase beta chain, mitochondrial (Mccc2) of Mus musculus (Mouse).